A 103-amino-acid chain; its full sequence is Small ribosomal subunit protein bS20 (103 aa).

A compositionally biased stretch (basic residues) spans 1-20; sequence MATAKPKKKNPRLASGRKRV. Residues 1–31 are disordered; it reads MATAKPKKKNPRLASGRKRVRQDTKLNAANT.

It belongs to the bacterial ribosomal protein bS20 family.

Binds directly to 16S ribosomal RNA. The protein is Small ribosomal subunit protein bS20 of Polaromonas sp. (strain JS666 / ATCC BAA-500).